The chain runs to 144 residues: Histone H3.1 (144 aa).

The tract at residues 1–45 is disordered; that stretch reads MARTKQSARKTTGGKAPRKQLSAKSARKGVSPASSAGAKKSRYRP. K5 carries the N6,N6,N6-trimethyllysine; alternate modification. K5 is modified (N6,N6-dimethyllysine; alternate). N6-methyllysine; alternate occurs at positions 5 and 10. K10, K15, K19, K24, K28, and K39 each carry N6-acetyllysine; alternate. K15 carries the N6,N6-dimethyllysine; alternate modification. Residues K19, K24, K28, and K39 each carry the N6-methyllysine; alternate modification. Residues K28 and K39 each carry the N6,N6,N6-trimethyllysine; alternate modification. N6,N6-dimethyllysine; alternate occurs at positions 28 and 39. K58 carries the N6-acetyllysine modification.

This sequence belongs to the histone H3 family. As to quaternary structure, the nucleosome is a histone octamer containing two molecules each of H2A, H2B, H3 and H4 assembled in one H3-H4 heterotetramer and two H2A-H2B heterodimers. The octamer wraps approximately 147 bp of DNA. Mono-, di- and trimethylated to form H3K4me1/2/3. H3K4me activates gene expression by regulating transcription elongation and plays a role in telomere length maintenance. H3K4me enrichment correlates with transcription levels, and occurs in a 5' to 3' gradient with H3K4me3 enrichment at the 5'-end of genes, shifting to H3K4me2 and then H3K4me1. H3K36me represses gene expression. Post-translationally, acetylation of histone H3 leads to transcriptional activation.

The protein resides in the nucleus. The protein localises to the chromosome. Core component of nucleosome. Nucleosomes wrap and compact DNA into chromatin, limiting DNA accessibility to the cellular machineries which require DNA as a template. Histones thereby play a central role in transcription regulation, DNA repair, DNA replication and chromosomal stability. DNA accessibility is regulated via a complex set of post-translational modifications of histones, also called histone code, and nucleosome remodeling. In Encephalitozoon cuniculi (strain GB-M1) (Microsporidian parasite), this protein is Histone H3.1 (HHT1).